The chain runs to 271 residues: Neurexophilin-1 (271 aa).

Positions 1–21 (MQAACWYVLLLLQPTVYLVTC) are cleaved as a signal peptide. Positions 22 to 97 (ANLTNGGKSE…WDWLRNSTDL (76 aa)) are II. Asn-23, Asn-68, Asn-93, Asn-146, Asn-156, and Asn-162 each carry an N-linked (GlcNAc...) asparagine glycan. The III stretch occupies residues 98–176 (QEPRPRAKRR…LVPPTKIVEF (79 aa)). The interval 177–185 (DLAQQTVID) is IV (linker domain). The v (Cys-rich) stretch occupies residues 186–271 (AKDSKSFNCR…HSDTPYFPSG (86 aa)).

Belongs to the neurexophilin family. May be proteolytically processed at the boundary between the N-terminal non-conserved and the central conserved domain in neuron-like cells.

Its subcellular location is the secreted. Functionally, may be signaling molecules that resemble neuropeptides. Ligand for alpha-neurexins. This Bos taurus (Bovine) protein is Neurexophilin-1 (NXPH1).